The following is a 118-amino-acid chain: Large ribosomal subunit protein bL21c (118 aa).

This sequence belongs to the bacterial ribosomal protein bL21 family. As to quaternary structure, part of the 50S ribosomal subunit.

It localises to the plastid. The protein localises to the chloroplast. This protein binds to 23S rRNA. The protein is Large ribosomal subunit protein bL21c of Psilotum nudum (Whisk fern).